The following is a 91-amino-acid chain: uncharacterized protein (91 aa).

The signal sequence occupies residues 1–21 (MKQLLASPSLQLVTYPASATA).

It belongs to the BhsA/McbA family.

It localises to the periplasm. This is an uncharacterized protein from Escherichia coli O157:H7.